The primary structure comprises 1099 residues: MSLNNSSSVFLDSVPTNTNRFQVNVINENHESCAAGIDNTDPPHYEETSFGDEQNRLRISFRPGNQECYDNFLQTGETTKTDASFHTYDSHTNTYYLQTFGHNTMDAVPKIEYYRNTGSVSGPKVNRPSLLEIHEQLAKNVAVTPGSADRVANGEGMPGEEHAENKEEDNKAGAVKFGWVKGVLVRCMLNIWGVMLFIRLSWIVGEAGIGLGVVIILLSTMVTSITGLSTSAIATNGFVRGGGAYYLISRSLGPEFGGSIGLIFAFANAVAVAMYVVGFAETVVDLLKESDSMMVDPTNDIRIIGSITVVILLGISVAGMEWEAKAQVILLIILLIAIANFFIGTVIPSNNEKKSRGFFNYQASIFAENFGPSFTKGEGFFSVFAIFFPAATGILAGANISGDLEDPQDAIPRGTMLAIFITTVAYIGVAICVGACVVRDATGSMNDTIISGINCNGSAACGLGYDFSRCRHEPCQYGLMNNFQVMSMVSGFGPLITAGIFSATLSSALASLVSAAKVFQALCKDNIYKALQFFAKGYGKNNEPLRGYILTFVIAMAFILIAELNTIAPIISNFFLASYALINFSCFHASYAKSPGWRPAYGIYNMWVSLFGAVLCCAVMFVINWWAAVITYVIEFFLYIYVTYKKPDVNWGSSTQALSYVSALDNALELTTVEDHVKNFRPQCFVLTGGPMTRPALLDITYAFTKNSGLCICCEVFVGPRKLCVKEMNSGMAKKQAWLIKNKIKAFYAAVAADCFRDGVRSLLQASGLGRMKPNTLVIGYKKKWRKAPLTEIENYVGIIHDAFDFEIGVVIVRISQGFDISQVLQVQEELEKLEQERLALEATIKDNECEEGNGGIRGLFKKVGKLNITKPTPKKDSSINTIQSMHVGEFNQKLVEASTQFKKKQGKGTIDVWWLFDDGGLTLLIPYILTLRKKWKDCKLRIYVGGKINRIEEEKIAMASLLSKFRIKFADIHVIGDINIKPNKESWKFFEEMIEPYRLHESCKDLTTAEKLKRETPWKITDAELEAVKEKSYRQVRLNELLQEHSRAANLIVLSLPVARKGSISDLLYMAWLEILTKNLPPVLLVRGNHKNVLTFYS.

Over 1 to 177 the chain is Cytoplasmic; the sequence is MSLNNSSSVF…EDNKAGAVKF (177 aa). The RFXV motif motif lies at 20–23; it reads RFQV. A phosphoserine mark is found at Ser-60 and Ser-90. Thr-94, Thr-99, Thr-104, and Thr-117 each carry phosphothreonine. Ser-119 is modified (phosphoserine). At Ser-129 the chain carries Phosphoserine; by AMPK. At Ser-147 the chain carries Phosphoserine. A disordered region spans residues 147 to 169; the sequence is SADRVANGEGMPGEEHAENKEED. Positions 159 to 169 are enriched in basic and acidic residues; the sequence is GEEHAENKEED. The helical transmembrane segment at 178–198 threads the bilayer; the sequence is GWVKGVLVRCMLNIWGVMLFI. The Extracellular portion of the chain corresponds to 199-201; that stretch reads RLS. The helical transmembrane segment at 202-222 threads the bilayer; the sequence is WIVGEAGIGLGVVIILLSTMV. Residues 223–259 lie on the Cytoplasmic side of the membrane; sequence TSITGLSTSAIATNGFVRGGGAYYLISRSLGPEFGGS. The helical transmembrane segment at 260–280 threads the bilayer; sequence IGLIFAFANAVAVAMYVVGFA. Residues 281–302 lie on the Extracellular side of the membrane; sequence ETVVDLLKESDSMMVDPTNDIR. A helical membrane pass occupies residues 303–323; sequence IIGSITVVILLGISVAGMEWE. At 324–327 the chain is on the cytoplasmic side; the sequence is AKAQ. The chain crosses the membrane as a helical span at residues 328–348; the sequence is VILLIILLIAIANFFIGTVIP. The Extracellular segment spans residues 349–379; the sequence is SNNEKKSRGFFNYQASIFAENFGPSFTKGEG. A helical membrane pass occupies residues 380–400; the sequence is FFSVFAIFFPAATGILAGANI. Topologically, residues 401–417 are cytoplasmic; sequence SGDLEDPQDAIPRGTML. A helical transmembrane segment spans residues 418–438; the sequence is AIFITTVAYIGVAICVGACVV. Over 439 to 550 the chain is Extracellular; that stretch reads RDATGSMNDT…NNEPLRGYIL (112 aa). 2 N-linked (GlcNAc...) asparagine glycosylation sites follow: Asn-446 and Asn-456. 2 consecutive transmembrane segments (helical) span residues 551-571 and 572-592; these read TFVI…APII and SNFF…ASYA. The Extracellular portion of the chain corresponds to 593-609; it reads KSPGWRPAYGIYNMWVS. The helical transmembrane segment at 610–630 threads the bilayer; it reads LFGAVLCCAVMFVINWWAAVI. At 631 to 1099 the chain is on the cytoplasmic side; sequence TYVIEFFLYI…NHKNVLTFYS (469 aa).

This sequence belongs to the SLC12A transporter family. As to quaternary structure, when phosphorylated, interacts with PPP3CB. Phosphorylated at Ser-90, Thr-99 and Thr-104 by OXSR1/OSR1 and STK39/SPAK downstream of WNK kinases (WNK1, WNK2, WNK3 or WNK4), promoting its activity. Predominant in kidney. The 3 isoforms are differentially distributed within the kidney: B almost exclusively in cortex, F almost exclusively in medulla, and A about equally distributed.

The protein resides in the apical cell membrane. The enzyme catalyses K(+)(out) + 2 chloride(out) + Na(+)(out) = K(+)(in) + 2 chloride(in) + Na(+)(in). Its activity is regulated as follows. Activated following phosphorylation by OXSR1/OSR1 and STK39/SPAK downstream of WNK kinases (WNK1, WNK2, WNK3 or WNK4). In terms of biological role, renal sodium, potassium and chloride ion cotransporter that mediates the transepithelial NaCl reabsorption in the thick ascending limb and plays an essential role in the urinary concentration and volume regulation. Electrically silent transporter system. This chain is Solute carrier family 12 member 1 (SLC12A1), found in Oryctolagus cuniculus (Rabbit).